A 348-amino-acid chain; its full sequence is MAAVPDRERALDLALAQIDKQFGKGSVMRLGERPVVETAVVPTGSIALDVALGVGGLPRGRVIEVYGPESSGKTTVALHAVANAQRSGGIAAFVDAEHALDPEYARALGVDTDALLVSQPDTGEQALEIADMLVRSGALDIIVIDSVAALVPRAEIEGEMGDSHVGLQARLMSQALRKMTGVLSHTGTTAVFINQLREKIGVMFGSPETTTGGRALKFYASVRLDVRRIESLKDGTDVVGNRTRVKVVKNKVAAPFKQAEFDIMYGKGISREGSLIDVGVEQAIIRKSGAWYTYEGDQLGQGKEKAREFLRENPDVAAEIEKKILEKLGVGAGAGDAAGGPELPPVDF.

Residue 67 to 74 participates in ATP binding; sequence GPESSGKT.

This sequence belongs to the RecA family.

It localises to the cytoplasm. Its function is as follows. Can catalyze the hydrolysis of ATP in the presence of single-stranded DNA, the ATP-dependent uptake of single-stranded DNA by duplex DNA, and the ATP-dependent hybridization of homologous single-stranded DNAs. It interacts with LexA causing its activation and leading to its autocatalytic cleavage. The sequence is that of Protein RecA from Salinispora tropica (strain ATCC BAA-916 / DSM 44818 / JCM 13857 / NBRC 105044 / CNB-440).